A 240-amino-acid polypeptide reads, in one-letter code: Coatomer subunit delta (240 aa).

The segment covering Ala215–Lys226 has biased composition (low complexity). Residues Ala215–Tyr240 form a disordered region. The segment covering Gly231–Tyr240 has biased composition (basic residues).

It belongs to the adaptor complexes medium subunit family. Delta-COP subfamily. Oligomeric complex that consists of at least the alpha, beta, beta', gamma, delta, epsilon and zeta subunits.

It is found in the cytoplasm. The protein resides in the nucleus. The coatomer is a cytosolic protein complex that binds to dilysine motifs and reversibly associates with Golgi non-clathrin-coated vesicles, which further mediate biosynthetic protein transport from the ER, via the Golgi up to the trans Golgi network. Coatomer complex is required for budding from Golgi membranes, and is essential for the retrograde Golgi-to-ER transport of dilysine-tagged proteins. The protein is Coatomer subunit delta (ret2) of Schizosaccharomyces pombe (strain 972 / ATCC 24843) (Fission yeast).